The chain runs to 103 residues: Large ribosomal subunit protein bL21 (103 aa).

It belongs to the bacterial ribosomal protein bL21 family. As to quaternary structure, part of the 50S ribosomal subunit. Contacts protein L20.

In terms of biological role, this protein binds to 23S rRNA in the presence of protein L20. In Photobacterium profundum (strain SS9), this protein is Large ribosomal subunit protein bL21.